Here is a 338-residue protein sequence, read N- to C-terminus: 1-aminocyclopropane-1-carboxylate deaminase (338 aa).

Lysine 51 carries the post-translational modification N6-(pyridoxal phosphate)lysine. Residue serine 78 is the Nucleophile of the active site.

Belongs to the ACC deaminase/D-cysteine desulfhydrase family. Homotrimer. Pyridoxal 5'-phosphate is required as a cofactor.

The enzyme catalyses 1-aminocyclopropane-1-carboxylate + H2O = 2-oxobutanoate + NH4(+). Its function is as follows. Catalyzes a cyclopropane ring-opening reaction, the irreversible conversion of 1-aminocyclopropane-1-carboxylate (ACC) to ammonia and alpha-ketobutyrate. Allows growth on ACC as a nitrogen source. The sequence is that of 1-aminocyclopropane-1-carboxylate deaminase from Burkholderia pseudomallei (strain 1710b).